The following is a 472-amino-acid chain: tRNA(Ile)-lysidine synthase (472 aa).

25–30 (SGGPDS) contributes to the ATP binding site.

This sequence belongs to the tRNA(Ile)-lysidine synthase family.

The protein resides in the cytoplasm. The catalysed reaction is cytidine(34) in tRNA(Ile2) + L-lysine + ATP = lysidine(34) in tRNA(Ile2) + AMP + diphosphate + H(+). Ligates lysine onto the cytidine present at position 34 of the AUA codon-specific tRNA(Ile) that contains the anticodon CAU, in an ATP-dependent manner. Cytidine is converted to lysidine, thus changing the amino acid specificity of the tRNA from methionine to isoleucine. This chain is tRNA(Ile)-lysidine synthase (tilS), found in Bacillus subtilis (strain 168).